The primary structure comprises 303 residues: Aliphatic sulfonates import ATP-binding protein SsuB (303 aa).

The ABC transporter domain occupies 39–263 (LHVRQVVKRY…ERGAAGFAQL (225 aa)). 71 to 78 (GRSGCGKS) is a binding site for ATP.

The protein belongs to the ABC transporter superfamily. Aliphatic sulfonates importer (TC 3.A.1.17.2) family. The complex is composed of two ATP-binding proteins (SsuB), two transmembrane proteins (SsuC) and a solute-binding protein (SsuA).

Its subcellular location is the cell inner membrane. It carries out the reaction ATP + H2O + aliphatic sulfonate-[sulfonate-binding protein]Side 1 = ADP + phosphate + aliphatic sulfonateSide 2 + [sulfonate-binding protein]Side 1.. Part of the ABC transporter complex SsuABC involved in aliphatic sulfonates import. Responsible for energy coupling to the transport system. The chain is Aliphatic sulfonates import ATP-binding protein SsuB from Cupriavidus necator (strain ATCC 17699 / DSM 428 / KCTC 22496 / NCIMB 10442 / H16 / Stanier 337) (Ralstonia eutropha).